We begin with the raw amino-acid sequence, 550 residues long: GMP synthase [glutamine-hydrolyzing] (550 aa).

Positions 39–232 (RILILDFGSQ…VHKICGCGGL (194 aa)) constitute a Glutamine amidotransferase type-1 domain. Cys-116 functions as the Nucleophile in the catalytic mechanism. Active-site residues include His-206 and Glu-208. One can recognise a GMPS ATP-PPase domain in the interval 233–425 (WTPEHIIDLR…LGLPHSMIYR (193 aa)). Position 260–266 (260–266 (SGGVDSS)) interacts with ATP.

In terms of assembly, homodimer.

It carries out the reaction XMP + L-glutamine + ATP + H2O = GMP + L-glutamate + AMP + diphosphate + 2 H(+). The protein operates within purine metabolism; GMP biosynthesis; GMP from XMP (L-Gln route): step 1/1. Its function is as follows. Catalyzes the synthesis of GMP from XMP. This Acinetobacter baylyi (strain ATCC 33305 / BD413 / ADP1) protein is GMP synthase [glutamine-hydrolyzing].